A 323-amino-acid polypeptide reads, in one-letter code: Elongation factor P--(R)-beta-lysine ligase (323 aa).

74–76 lines the substrate pocket; the sequence is SPE. ATP-binding positions include 98-100 and asparagine 107; that span reads RNE. Tyrosine 116 contacts substrate. Position 242–243 (242–243) interacts with ATP; it reads EL. Glutamate 249 serves as a coordination point for substrate. Glycine 298 serves as a coordination point for ATP.

Belongs to the class-II aminoacyl-tRNA synthetase family. EpmA subfamily. As to quaternary structure, homodimer.

The enzyme catalyses D-beta-lysine + L-lysyl-[protein] + ATP = N(6)-((3R)-3,6-diaminohexanoyl)-L-lysyl-[protein] + AMP + diphosphate + H(+). Its function is as follows. With EpmB is involved in the beta-lysylation step of the post-translational modification of translation elongation factor P (EF-P). Catalyzes the ATP-dependent activation of (R)-beta-lysine produced by EpmB, forming a lysyl-adenylate, from which the beta-lysyl moiety is then transferred to the epsilon-amino group of a conserved specific lysine residue in EF-P. The chain is Elongation factor P--(R)-beta-lysine ligase from Vibrio atlanticus (strain LGP32) (Vibrio splendidus (strain Mel32)).